The following is a 284-amino-acid chain: Bifunctional protein FolD (284 aa).

NADP(+) is bound by residues 166-168 (GAS) and Ile232.

Belongs to the tetrahydrofolate dehydrogenase/cyclohydrolase family. In terms of assembly, homodimer.

The enzyme catalyses (6R)-5,10-methylene-5,6,7,8-tetrahydrofolate + NADP(+) = (6R)-5,10-methenyltetrahydrofolate + NADPH. The catalysed reaction is (6R)-5,10-methenyltetrahydrofolate + H2O = (6R)-10-formyltetrahydrofolate + H(+). It functions in the pathway one-carbon metabolism; tetrahydrofolate interconversion. In terms of biological role, catalyzes the oxidation of 5,10-methylenetetrahydrofolate to 5,10-methenyltetrahydrofolate and then the hydrolysis of 5,10-methenyltetrahydrofolate to 10-formyltetrahydrofolate. This is Bifunctional protein FolD from Shewanella baltica (strain OS195).